Reading from the N-terminus, the 253-residue chain is Acetylglutamate kinase (253 aa).

Residues 37 to 38 (GG), Arg-59, and Asn-149 each bind substrate.

It belongs to the acetylglutamate kinase family. ArgB subfamily.

It localises to the cytoplasm. It catalyses the reaction N-acetyl-L-glutamate + ATP = N-acetyl-L-glutamyl 5-phosphate + ADP. It functions in the pathway amino-acid biosynthesis; L-arginine biosynthesis; N(2)-acetyl-L-ornithine from L-glutamate: step 2/4. Functionally, catalyzes the ATP-dependent phosphorylation of N-acetyl-L-glutamate. The protein is Acetylglutamate kinase of Rubrobacter xylanophilus (strain DSM 9941 / JCM 11954 / NBRC 16129 / PRD-1).